We begin with the raw amino-acid sequence, 365 residues long: UDP-N-acetylglucosamine--N-acetylmuramyl-(pentapeptide) pyrophosphoryl-undecaprenol N-acetylglucosamine transferase (365 aa).

Residues Thr-10–Gly-12, Asn-128, Arg-170, Ser-199, Ile-250, and Gln-295 each bind UDP-N-acetyl-alpha-D-glucosamine.

This sequence belongs to the glycosyltransferase 28 family. MurG subfamily.

The protein resides in the cell inner membrane. It catalyses the reaction di-trans,octa-cis-undecaprenyl diphospho-N-acetyl-alpha-D-muramoyl-L-alanyl-D-glutamyl-meso-2,6-diaminopimeloyl-D-alanyl-D-alanine + UDP-N-acetyl-alpha-D-glucosamine = di-trans,octa-cis-undecaprenyl diphospho-[N-acetyl-alpha-D-glucosaminyl-(1-&gt;4)]-N-acetyl-alpha-D-muramoyl-L-alanyl-D-glutamyl-meso-2,6-diaminopimeloyl-D-alanyl-D-alanine + UDP + H(+). Its pathway is cell wall biogenesis; peptidoglycan biosynthesis. Cell wall formation. Catalyzes the transfer of a GlcNAc subunit on undecaprenyl-pyrophosphoryl-MurNAc-pentapeptide (lipid intermediate I) to form undecaprenyl-pyrophosphoryl-MurNAc-(pentapeptide)GlcNAc (lipid intermediate II). The chain is UDP-N-acetylglucosamine--N-acetylmuramyl-(pentapeptide) pyrophosphoryl-undecaprenol N-acetylglucosamine transferase from Pelodictyon phaeoclathratiforme (strain DSM 5477 / BU-1).